Here is a 77-residue protein sequence, read N- to C-terminus: uncharacterized protein (77 aa).

Residues 1 to 77 form the Peptidase A1 domain; it reads MAFERQGKIE…VAILDGKLVW (77 aa).

This is an uncharacterized protein from Saccharomyces cerevisiae (strain ATCC 204508 / S288c) (Baker's yeast).